A 947-amino-acid chain; its full sequence is Protocadherin alpha-4 (947 aa).

The first 29 residues, 1–29 (MEFSWGSGQESRRLLLLLLLLAAWEAGNG), serve as a signal peptide directing secretion. Cadherin domains lie at 30-133 (QLHY…PPVF), 134-242 (PATQ…APAF), 243-350 (DRTI…VPDL), 351-455 (EFKS…APAF), 456-565 (AQPE…APAL), and 588-678 (GHVV…APKA). Topologically, residues 30-697 (QLHYSVSEEA…GPDAALVDVN (668 aa)) are extracellular. A disulfide bridge connects residues Cys-96 and Cys-102. Asn-139, Asn-257, and Asn-265 each carry an N-linked (GlcNAc...) asparagine glycan. Asn-548 carries N-linked (GlcNAc...) asparagine glycosylation. Residues 698-718 (VYLIIAICAVSSLLVLTLLLY) form a helical membrane-spanning segment. Residues 719–947 (TALRCSALPT…GNSTTDNSDQ (229 aa)) are Cytoplasmic-facing. 6 PXXP repeats span residues 734–737 (PGKP), 774–777 (PSLP), 796–799 (PRQP), 829–832 (PGGP), 870–873 (PGNP), and 888–891 (PGSP). Positions 734 to 891 (PGKPTLVCSS…PDKFIIPGSP (158 aa)) are 6 X 4 AA repeats of P-X-X-P. Residues 738-947 (TLVCSSAVGS…GNSTTDNSDQ (210 aa)) form a required for interaction with FYN region. Disordered stretches follow at residues 754-805 (RRPR…DWRY), 828-853 (GPGG…EVSP), and 868-947 (YGPG…NSDQ). Residues 906 to 920 (DKSDFITFGKKEETK) are compositionally biased toward basic and acidic residues.

In terms of assembly, forms homodimers in trans (molecules expressed by two different cells). Forms promiscuous heterodimers in cis (at the plasma membrane of the same cell) with other protocadherins. Interacts with FYN.

The protein resides in the cell membrane. Functionally, calcium-dependent cell-adhesion protein involved in cells self-recognition and non-self discrimination. Thereby, it is involved in the establishment and maintenance of specific neuronal connections in the brain. The chain is Protocadherin alpha-4 from Homo sapiens (Human).